The chain runs to 253 residues: UPF0174 protein jhp_1494 (253 aa).

It belongs to the UPF0174 family.

This chain is UPF0174 protein jhp_1494, found in Helicobacter pylori (strain J99 / ATCC 700824) (Campylobacter pylori J99).